The primary structure comprises 150 residues: uncharacterized protein (150 aa).

An N-terminal signal peptide occupies residues 1-23 (MYSILIACLVLLLCLIIYVGHRA).

It belongs to the asfivirus EP152R family.

It localises to the virion. This is an uncharacterized protein from African swine fever virus (isolate Warthog/Namibia/Wart80/1980) (ASFV).